Reading from the N-terminus, the 154-residue chain is uncharacterized protein (154 aa).

4 helical membrane-spanning segments follow: residues 20-42, 62-84, 91-109, and 113-132; these read FRLF…GQFG, FFGY…AVLL, ALGA…LINY, and IGVQ…LLWM.

The protein localises to the cell membrane. This is an uncharacterized protein from Bacillus subtilis (strain 168).